Reading from the N-terminus, the 113-residue chain is Cytochrome c (113 aa).

Heme c-binding residues include cysteine 21, cysteine 24, histidine 25, and methionine 90.

The protein belongs to the cytochrome c family. Post-translationally, binds 1 heme c group covalently per subunit.

The protein resides in the mitochondrion intermembrane space. Its function is as follows. Electron carrier protein. The oxidized form of the cytochrome c heme group can accept an electron from the heme group of the cytochrome c1 subunit of cytochrome reductase. Cytochrome c then transfers this electron to the cytochrome oxidase complex, the final protein carrier in the mitochondrial electron-transport chain. The sequence is that of Cytochrome c (cytC) from Dictyostelium discoideum (Social amoeba).